The primary structure comprises 377 residues: MSNAKDNFNVADLTAALNAEDRDDLVNVLKNKLQGLTGKHSNVLENLSPNVRKRVEVLREIQTQHDELEAKFFEERAALEAKYQKQYQPLYAKRSEIVNGVVEVDGEATQTAAADEEEDKDSVEKGVPDFWVTAMKNNEVLAEEITERDEGALKFLKDIKWSRIENPKGFKLEFFFETNPYFTNTVLTKTYHMIDEDEPILEKAIGTEIEWHPGKCLTQKILKKKPKKGSKNSKPITKIEQCESFFNFFSPPQVPDDEEDIDEDAAEELQNLMEQDYDIGSTIRDKIIPHAVSWFTGEAAQDEDYIDLEDDEDEEDDEDEDEDEEDEEEEDEDEDDDDEDEHVTKTKKKSSAGRKRSGGAPAADGQPGERPPECKQQ.

A coiled-coil region spans residues 26–80 (VNVLKNKLQGLTGKHSNVLENLSPNVRKRVEVLREIQTQHDELEAKFFEERAALE). The Nuclear export signal motif lies at 47–62 (LSPNVRKRVEVLREIQ). A Nuclear localization signal motif is present at residues 223–228 (KKKPKK). The segment at 298 to 377 (EAAQDEDYID…GERPPECKQQ (80 aa)) is disordered. Positions 300–341 (AQDEDYIDLEDDEDEEDDEDEDEDEEDEEEEDEDEDDDDEDE) are enriched in acidic residues. Over residues 345–357 (KTKKKSSAGRKRS) the composition is skewed to basic residues. The residue at position 374 (C374) is a Cysteine methyl ester. A lipid anchor (S-farnesyl cysteine) is attached at C374. Residues 375–377 (KQQ) constitute a propeptide, removed in mature form.

It belongs to the nucleosome assembly protein (NAP) family. In terms of assembly, can form homomeric and heteromeric protein complexes with NAP1;4. Binds histones H2A and H2B in vivo. Also able to bind histones H1 and H4 in vitro. Interacts with CYCB1;1 and with alpha tubulin.

The protein resides in the nucleus. The protein localises to the cytoplasm. May modulate chromatin structure by regulation of nucleosome assembly/disassembly. Could function together with B-type cyclins in the regulation of microtubule dynamics. The polypeptide is Nucleosome assembly protein 1;3 (NAP1;3) (Nicotiana tabacum (Common tobacco)).